Here is a 305-residue protein sequence, read N- to C-terminus: GTP cyclohydrolase FolE2 (305 aa).

This sequence belongs to the GTP cyclohydrolase IV family.

The enzyme catalyses GTP + H2O = 7,8-dihydroneopterin 3'-triphosphate + formate + H(+). It participates in cofactor biosynthesis; 7,8-dihydroneopterin triphosphate biosynthesis; 7,8-dihydroneopterin triphosphate from GTP: step 1/1. Its function is as follows. Converts GTP to 7,8-dihydroneopterin triphosphate. This Xanthomonas euvesicatoria pv. vesicatoria (strain 85-10) (Xanthomonas campestris pv. vesicatoria) protein is GTP cyclohydrolase FolE2.